The sequence spans 357 residues: SUN domain-containing protein 3 (357 aa).

Over 1–47 the chain is Nuclear; the sequence is MSGKTKARRAAMFFRRCSEDASGSASGNALLSEDENPDANGVTRSWK. The helical transmembrane segment at 48–64 threads the bilayer; it reads IILSTMLTLTFLLVGLL. Topologically, residues 65 to 357 are perinuclear space; sequence NHQWLKETDV…RVHGTPGKHI (293 aa). The stretch at 98–146 forms a coiled coil; the sequence is RLRMPKEQLELLKKESQNLENNFRQILFLIEQIDVLKALLRDMKDGMDN. Residues 193 to 354 enclose the SUN domain; sequence GASIIEAGTS…YRFRVHGTPG (162 aa).

In terms of assembly, self-associates. Interacts with SYNE1 and SPAG4/SUN4. Proposed to form a spermatogenesis-specific LINC complex with SYNE1 during sperm head formation possibly implicating a SUN domain-based heterotrimer with SPAG4/SUN4 associating with SYNE1.

Its subcellular location is the membrane. It localises to the nucleus envelope. It is found in the nucleus inner membrane. In terms of biological role, as a probable component of the LINC (LInker of Nucleoskeleton and Cytoskeleton) complex, involved in the connection between the nuclear lamina and the cytoskeleton. The nucleocytoplasmic interactions established by the LINC complex play an important role in the transmission of mechanical forces across the nuclear envelope and in nuclear movement and positioning. May be involved in nuclear remodeling during sperm head formation in spermatogenesis. A probable SUN3:SYNE1 LINC complex may tether spermatid nuclei to posterior cytoskeletal structures such as the manchette. The polypeptide is SUN domain-containing protein 3 (SUN3) (Homo sapiens (Human)).